The sequence spans 618 residues: DNA mismatch repair protein MutL (618 aa).

The segment covering 367-378 has biased composition (low complexity); the sequence is EPTAAREPATPR. Positions 367–402 are disordered; the sequence is EPTAAREPATPRYSGGASGGNGGRQTAGGWPHAQPG. Residues 382–392 show a composition bias toward gly residues; the sequence is GASGGNGGRQT.

It belongs to the DNA mismatch repair MutL/HexB family.

Its function is as follows. This protein is involved in the repair of mismatches in DNA. It is required for dam-dependent methyl-directed DNA mismatch repair. May act as a 'molecular matchmaker', a protein that promotes the formation of a stable complex between two or more DNA-binding proteins in an ATP-dependent manner without itself being part of a final effector complex. The protein is DNA mismatch repair protein MutL of Salmonella choleraesuis (strain SC-B67).